We begin with the raw amino-acid sequence, 305 residues long: Imidazoleglycerol-phosphate dehydratase (305 aa).

This sequence belongs to the imidazoleglycerol-phosphate dehydratase family.

Its subcellular location is the cytoplasm. It carries out the reaction D-erythro-1-(imidazol-4-yl)glycerol 3-phosphate = 3-(imidazol-4-yl)-2-oxopropyl phosphate + H2O. The protein operates within amino-acid biosynthesis; L-histidine biosynthesis; L-histidine from 5-phospho-alpha-D-ribose 1-diphosphate: step 6/9. This Neisseria meningitidis serogroup C (strain 053442) protein is Imidazoleglycerol-phosphate dehydratase.